The sequence spans 515 residues: Maturase K (515 aa).

This sequence belongs to the intron maturase 2 family. MatK subfamily.

It localises to the plastid. It is found in the chloroplast. In terms of biological role, usually encoded in the trnK tRNA gene intron. Probably assists in splicing its own and other chloroplast group II introns. The protein is Maturase K of Pinus cembra (Swiss stone pine).